Consider the following 447-residue polypeptide: Guanine nucleotide-binding protein alpha-1 subunit (447 aa).

The N-myristoyl glycine moiety is linked to residue Gly-2. Residue Cys-3 is the site of S-palmitoyl cysteine attachment. The region spanning 40 to 447 (NEVKLLLLGA…QQNLKKSGIL (408 aa)) is the G-alpha domain. A G1 motif region spans residues 43–56 (KLLLLGAGESGKST). GTP contacts are provided by Glu-51, Ser-52, Gly-53, Lys-54, Ser-55, Thr-56, Leu-269, Thr-275, Gly-297, Asn-363, Lys-364, Asp-366, and Ala-419. Ser-55 contacts Mg(2+). The tract at residues 267–275 (DILKGRIKT) is G2 motif. Thr-275 is a Mg(2+) binding site. Residues 290–299 (FKVYDAGGQR) are G3 motif. Residues 359–366 (ILFLNKVD) are G4 motif. A G5 motif region spans residues 417 to 422 (TCATDT).

Belongs to the G-alpha family. As to quaternary structure, g proteins are composed of 3 units; alpha, beta and gamma. The alpha chain contains the guanine nucleotide binding site. Mg(2+) serves as cofactor.

In terms of biological role, guanine nucleotide-binding proteins (G proteins) are involved as modulators or transducers in various transmembrane signaling systems. This protein is involved in the mating response pathway. The sequence is that of Guanine nucleotide-binding protein alpha-1 subunit (GPA1) from Kluyveromyces lactis (strain ATCC 8585 / CBS 2359 / DSM 70799 / NBRC 1267 / NRRL Y-1140 / WM37) (Yeast).